A 94-amino-acid chain; its full sequence is MTKSELIERLATQQSHIPAKTVEDAVKEMLEHMASTLAQGERIEIRGFGSFSLHYRAPRTGRNPKTGDKVELEGKYVPHFKPGKELRDRANIYG.

Belongs to the bacterial histone-like protein family. Heterodimer of an alpha and a beta chain.

This protein is one of the two subunits of integration host factor, a specific DNA-binding protein that functions in genetic recombination as well as in transcriptional and translational control. This Escherichia coli (strain UTI89 / UPEC) protein is Integration host factor subunit beta.